A 506-amino-acid chain; its full sequence is UDP-N-acetylmuramoylalanine--D-glutamate ligase (506 aa).

128 to 134 is a binding site for ATP; sequence GTNGKTT.

Belongs to the MurCDEF family.

The protein localises to the cytoplasm. It carries out the reaction UDP-N-acetyl-alpha-D-muramoyl-L-alanine + D-glutamate + ATP = UDP-N-acetyl-alpha-D-muramoyl-L-alanyl-D-glutamate + ADP + phosphate + H(+). Its pathway is cell wall biogenesis; peptidoglycan biosynthesis. In terms of biological role, cell wall formation. Catalyzes the addition of glutamate to the nucleotide precursor UDP-N-acetylmuramoyl-L-alanine (UMA). This Albidiferax ferrireducens (strain ATCC BAA-621 / DSM 15236 / T118) (Rhodoferax ferrireducens) protein is UDP-N-acetylmuramoylalanine--D-glutamate ligase.